We begin with the raw amino-acid sequence, 430 residues long: Enolase (430 aa).

Residue Q165 participates in (2R)-2-phosphoglycerate binding. The active-site Proton donor is the E207. Residues D244, E287, and D314 each coordinate Mg(2+). Positions 339, 368, 369, and 390 each coordinate (2R)-2-phosphoglycerate. The Proton acceptor role is filled by K339.

Belongs to the enolase family. As to quaternary structure, component of the RNA degradosome, a multiprotein complex involved in RNA processing and mRNA degradation. It depends on Mg(2+) as a cofactor.

It is found in the cytoplasm. The protein localises to the secreted. Its subcellular location is the cell surface. The enzyme catalyses (2R)-2-phosphoglycerate = phosphoenolpyruvate + H2O. Its pathway is carbohydrate degradation; glycolysis; pyruvate from D-glyceraldehyde 3-phosphate: step 4/5. Catalyzes the reversible conversion of 2-phosphoglycerate (2-PG) into phosphoenolpyruvate (PEP). It is essential for the degradation of carbohydrates via glycolysis. This chain is Enolase, found in Xanthomonas axonopodis pv. citri (strain 306).